The primary structure comprises 735 residues: Transcription initiation factor IIF subunit alpha (735 aa).

Disordered stretches follow at residues 1–68 (MSRR…EYAE), 165–263 (EYKK…TANL), 297–323 (NEPEFEEGTMDPLADVAPDGGGRAKRG), 446–465 (KAVADQQAMDEDDRDDNSEV), 471–606 (EEFA…HKEP), and 631–674 (PEGE…EETP). Positions 33-54 (RMRMGQNGSNSSSPGVPNGDNS) are enriched in low complexity. Composition is skewed to basic and acidic residues over residues 59-68 (VKKDDPEYAE) and 165-174 (EYKKKAEQER). Positions 175–219 (STPNSGGMNKSGTVSLNNTVKDGSQTPTVDSVTKDNTANGVNSSI) are enriched in polar residues. The residue at position 198 (Ser-198) is a Phosphoserine. Position 200 is a phosphothreonine (Thr-200). Residues 220–238 (PTVTGSSVPPASPTTVSAV) show a composition bias toward low complexity. Polar residues predominate over residues 239–263 (ESNGLSNGSTSAANGLDGNASTANL). Acidic residues-rich tracts occupy residues 453–465 (AMDEDDRDDNSEV) and 471–480 (EEFADDEEAP). The span at 487 to 500 (QENKESEQRIKKEM) shows a compositional bias: basic and acidic residues. The span at 513 to 522 (APSENEEDEL) shows a compositional bias: acidic residues. At Ser-515 the chain carries Phosphoserine. Residues 523–536 (FGEKKIDEDGERIK) show a composition bias toward basic and acidic residues. Residues Ser-560, Ser-562, and Ser-571 each carry the phosphoserine modification. The span at 564–583 (IENKENESPVKKEEDSDTLS) shows a compositional bias: basic and acidic residues. Basic residues predominate over residues 584-595 (KSKRSSPKKQQK). The span at 636 to 654 (NPQTTKAVDSSNNASNTVP) shows a compositional bias: polar residues. Ser-655 is subject to Phosphoserine.

Belongs to the TFIIF alpha subunit family. As to quaternary structure, TFIIF is composed of three different subunits: TFG1/RAP74, TFG2/RAP30 and TAF14. Phosphorylated on Ser and other residues by TAF1 and casein kinase II-like kinases.

It localises to the nucleus. In terms of biological role, TFIIF is a general transcription initiation factor that binds to RNA polymerase II. Its functions include the recruitment of RNA polymerase II to the promoter bound DNA-TBP-TFIIB complex, decreasing the affinity of RNA polymerase II for non-specific DNA, allowing for the subsequent recruitment of TFIIE and TFIIH, and facilitating RNA polymerase II elongation. The protein is Transcription initiation factor IIF subunit alpha (TFG1) of Saccharomyces cerevisiae (strain ATCC 204508 / S288c) (Baker's yeast).